Consider the following 22-residue polypeptide: Odorant-binding protein 1 (22 aa).

Belongs to the calycin superfamily. Lipocalin family. In terms of assembly, homodimer. The N-terminus is blocked.

Its function is as follows. Binds the chemical odorant, 2-isobutyl-3-methoxypyrazine. This is Odorant-binding protein 1 from Oryctolagus cuniculus (Rabbit).